The chain runs to 435 residues: uncharacterized protein (435 aa).

Transmembrane regions (helical) follow at residues 26–46 (LLSGIIILNYFDRVAISVAAP), 61–81 (IVFSIYTYSYTLMQLPVGSLL), 96–116 (IWSFLTILLAFLQGKLLLYLF), 119–139 (LIGLTSASAFPAASKATALWF), 150–170 (LFDSAAKFSNVIGAPLVAFLV), 177–197 (VAFLTIGCINVLFTIFFWQYY), 242–262 (VWGLMIGFTGYGYTFNLLLTW), 281–301 (FTAVPWLISTISGIAVGGWLV), 325–345 (FGFFFLGSILTNNITVAIICI), 347–367 (IGLAGISATAPVGWSISAELA), 385–405 (LFGGIIAASLTGYLFDVTGSF), and 407–427 (LSFLVAGFVLLLGLVFYVFVL).

It belongs to the major facilitator superfamily. Phthalate permease family.

It localises to the cell membrane. This is an uncharacterized protein from Bacillus subtilis (strain 168).